The chain runs to 76 residues: Peptide ARACIN 1 (76 aa).

The first 22 residues, 1–22, serve as a signal peptide directing secretion; sequence MAMKTSHVLLLCLMFVIGFVEA. Residues 23–35 constitute a propeptide, removed in mature form; that stretch reads RRSDTGPDISTPP. Residues 36–38 carry the SxS motif essential for MIK2 binding motif; that stretch reads SGS. An SCOOP motif motif is present at residues 36–49; that stretch reads SGSCGASIAEFNSS. The disordered stretch occupies residues 56–76; that stretch reads APPCRRPRLQNSEDVTHTTLP. Residues 64-76 are compositionally biased toward polar residues; it reads LQNSEDVTHTTLP.

It belongs to the serine rich endogenous peptide (SCOOP) phytocytokine family. As to quaternary structure, interacts with MIK2 (via extracellular leucine-rich repeat domain); this interaction triggers the formation of complex between MIK2 and the BAK1/SERK3 and SERK4 coreceptors, and subsequent BAK1 activation by phosphorylation. As to expression, mainly expressed in young developing leaves, hydathodes, immature flowers and elongating pollen tubes.

The protein localises to the cell membrane. The protein resides in the secreted. Its subcellular location is the extracellular space. It is found in the apoplast. It localises to the endoplasmic reticulum. Brassicaceae-specific phytocytokine (plant endogenous peptide released into the apoplast) perceived by MIK2 in a BAK1/SERK3 and SERK4 coreceptors-dependent manner, that modulates various physiological and antimicrobial processes including growth prevention and reactive oxygen species (ROS) response regulation. Inhibits the fungal growth of Alternaria brassicicola, Sclerotinia sclerotiorum, Fusarium graminearum, yeast (Saccharomyces) and Botrytis cinerea, thus being an antimicrobial peptide (AMP). Promotes resistance to A.brassicicola and B.cinerea. In Arabidopsis thaliana (Mouse-ear cress), this protein is Peptide ARACIN 1.